A 273-amino-acid polypeptide reads, in one-letter code: Large ribosomal subunit protein uL2 (273 aa).

Disordered regions lie at residues 35–54 and 222–273; these read DKKD…TRHI and GMAM…RRNK. Over residues 229 to 239 the composition is skewed to basic and acidic residues; sequence DHPHGGGEGRN. Positions 253 to 273 are enriched in basic residues; sequence KGFKTRKNKRTDKYIVRRRNK.

Belongs to the universal ribosomal protein uL2 family. As to quaternary structure, part of the 50S ribosomal subunit. Forms a bridge to the 30S subunit in the 70S ribosome.

Functionally, one of the primary rRNA binding proteins. Required for association of the 30S and 50S subunits to form the 70S ribosome, for tRNA binding and peptide bond formation. It has been suggested to have peptidyltransferase activity; this is somewhat controversial. Makes several contacts with the 16S rRNA in the 70S ribosome. In Aeromonas hydrophila subsp. hydrophila (strain ATCC 7966 / DSM 30187 / BCRC 13018 / CCUG 14551 / JCM 1027 / KCTC 2358 / NCIMB 9240 / NCTC 8049), this protein is Large ribosomal subunit protein uL2.